The primary structure comprises 123 residues: WAP four-disulfide core domain protein 2 (123 aa).

An N-terminal signal peptide occupies residues 1-28; it reads MPASRLVPLGAVLLLGLLLLLELPPVTG. WAP domains are found at residues 30 to 71 and 74 to 122; these read GADK…SAIC and PNEK…VTPN. Intrachain disulfides connect Cys37/Cys63, Cys46/Cys67, Cys50/Cys62, Cys56/Cys71, Cys81/Cys109, Cys92/Cys113, Cys96/Cys108, and Cys102/Cys118. A glycan (N-linked (GlcNAc...) asparagine) is linked at Asn45.

Homotrimer; disulfide-linked. In terms of tissue distribution, epididymis.

It is found in the secreted. Its function is as follows. Broad range protease inhibitor. This chain is WAP four-disulfide core domain protein 2 (WFDC2), found in Oryctolagus cuniculus (Rabbit).